We begin with the raw amino-acid sequence, 716 residues long: Polyribonucleotide nucleotidyltransferase (716 aa).

Mg(2+)-binding residues include Asp-490 and Asp-496. The region spanning 556 to 615 (PKIETLTIPTDKIREVIGSGGKVIREIVETSGAKVDINDDGVIKIASNDQAAIKKAYDMI) is the KH domain. One can recognise an S1 motif domain in the interval 625–693 (GQIYTGKVVK…ERGKVRLGMK (69 aa)). The disordered stretch occupies residues 695-716 (VDQETGQEIQPEKKEKEEAGEA). The span at 704–716 (QPEKKEKEEAGEA) shows a compositional bias: basic and acidic residues.

This sequence belongs to the polyribonucleotide nucleotidyltransferase family. Mg(2+) serves as cofactor.

It localises to the cytoplasm. It catalyses the reaction RNA(n+1) + phosphate = RNA(n) + a ribonucleoside 5'-diphosphate. In terms of biological role, involved in mRNA degradation. Catalyzes the phosphorolysis of single-stranded polyribonucleotides processively in the 3'- to 5'-direction. The chain is Polyribonucleotide nucleotidyltransferase from Cereibacter sphaeroides (strain ATCC 17029 / ATH 2.4.9) (Rhodobacter sphaeroides).